We begin with the raw amino-acid sequence, 547 residues long: Putative laccase-5 (547 aa).

An N-terminal signal peptide occupies residues 1 to 35; that stretch reads MGTPRGLRNAGSSSSACRFLAAFAVLLALPTLTAG. 2 Plastocyanin-like domains span residues 43 to 159 and 170 to 323; these read NVQM…PKRG and ELPP…YAPT. N-linked (GlcNAc...) asparagine glycosylation is found at N48 and N89. Positions 93, 95, 138, and 140 each coordinate Cu cation. Residues N199, N215, N251, N311, N342, N349, N388, N395, N405, and N430 are each glycosylated (N-linked (GlcNAc...) asparagine). Positions 408–531 constitute a Plastocyanin-like 3 domain; sequence FVRPRVALLE…SMAWLVNDGP (124 aa). Positions 448, 451, 453, 510, 511, 512, and 516 each coordinate Cu cation.

This sequence belongs to the multicopper oxidase family. It depends on Cu cation as a cofactor.

It localises to the secreted. The protein resides in the extracellular space. Its subcellular location is the apoplast. The enzyme catalyses 4 hydroquinone + O2 = 4 benzosemiquinone + 2 H2O. In terms of biological role, lignin degradation and detoxification of lignin-derived products. The protein is Putative laccase-5 (LAC5) of Oryza sativa subsp. japonica (Rice).